We begin with the raw amino-acid sequence, 163 residues long: Putative 4-hydroxy-4-methyl-2-oxoglutarate aldolase (163 aa).

Residues 76–79 (GDMI) and Arg98 contribute to the substrate site. Position 99 (Asp99) interacts with a divalent metal cation.

Belongs to the class II aldolase/RraA-like family. As to quaternary structure, homotrimer. A divalent metal cation serves as cofactor.

The catalysed reaction is 4-hydroxy-4-methyl-2-oxoglutarate = 2 pyruvate. It carries out the reaction oxaloacetate + H(+) = pyruvate + CO2. Catalyzes the aldol cleavage of 4-hydroxy-4-methyl-2-oxoglutarate (HMG) into 2 molecules of pyruvate. Also contains a secondary oxaloacetate (OAA) decarboxylase activity due to the common pyruvate enolate transition state formed following C-C bond cleavage in the retro-aldol and decarboxylation reactions. The protein is Putative 4-hydroxy-4-methyl-2-oxoglutarate aldolase of Pseudomonas fluorescens (strain Pf0-1).